The primary structure comprises 658 residues: Threonine--tRNA ligase (658 aa).

Residues 1–64 (MLNSVSLTFP…GKSGKVEIIT (64 aa)) form the TGS domain. Residues 246–549 (DHRKLGREMD…LIENYSGHFP (304 aa)) form a catalytic region. The Zn(2+) site is built by Cys-343, His-394, and His-526.

This sequence belongs to the class-II aminoacyl-tRNA synthetase family. Homodimer. The cofactor is Zn(2+).

The protein resides in the cytoplasm. The catalysed reaction is tRNA(Thr) + L-threonine + ATP = L-threonyl-tRNA(Thr) + AMP + diphosphate + H(+). In terms of biological role, catalyzes the attachment of threonine to tRNA(Thr) in a two-step reaction: L-threonine is first activated by ATP to form Thr-AMP and then transferred to the acceptor end of tRNA(Thr). Also edits incorrectly charged L-seryl-tRNA(Thr). The polypeptide is Threonine--tRNA ligase (Mesorhizobium japonicum (strain LMG 29417 / CECT 9101 / MAFF 303099) (Mesorhizobium loti (strain MAFF 303099))).